The chain runs to 254 residues: 3-oxo-5-alpha-steroid 4-dehydrogenase 2 (254 aa).

4 consecutive transmembrane segments (helical) span residues 8 to 28, 72 to 92, 146 to 166, and 206 to 226; these read VPVL…LCLG, PRSL…AHYF, FSFG…SDYT, and LATW…FLGM.

Belongs to the steroid 5-alpha reductase family. Expressed in high levels in the prostate and many other androgen-sensitive tissues.

It localises to the microsome membrane. It is found in the endoplasmic reticulum membrane. The enzyme catalyses a 3-oxo-5alpha-steroid + NADP(+) = a 3-oxo-Delta(4)-steroid + NADPH + H(+). It catalyses the reaction 17beta-hydroxy-5alpha-androstan-3-one + NADP(+) = testosterone + NADPH + H(+). It carries out the reaction 5alpha-pregnane-3,20-dione + NADP(+) = progesterone + NADPH + H(+). In terms of biological role, converts testosterone (T) into 5-alpha-dihydrotestosterone (DHT) and progesterone or corticosterone into their corresponding 5-alpha-3-oxosteroids. It plays a central role in sexual differentiation and androgen physiology. The protein is 3-oxo-5-alpha-steroid 4-dehydrogenase 2 (Srd5a2) of Rattus norvegicus (Rat).